The chain runs to 373 residues: Sorting nexin-21 (373 aa).

Residues 1–107 (MHRGTQEGAM…RSPPPDGQWG (107 aa)) are disordered. Over residues 21 to 37 (ALAGDGPGEAAASPEAE) the composition is skewed to low complexity. A compositionally biased stretch (polar residues) spans 55–65 (SRLSGTLSFTS). Residues 66-81 (AEDDEDDEDEDDEEAG) are compositionally biased toward acidic residues. The PX domain maps to 129 to 246 (QRLLFEVTSA…DFFVLPELRR (118 aa)). A 1,2-diacyl-sn-glycero-3-phospho-(1D-myo-inositol-3-phosphate) contacts are provided by arginine 171, serine 173, lysine 198, and arginine 212.

Belongs to the sorting nexin family. Monomer. In terms of tissue distribution, highly expressed in fetus liver, but only weakly expressed in brain, skeleton muscle, smooth muscle, and cardiac muscle, kidney, and adrenal gland.

Its subcellular location is the cytoplasmic vesicle membrane. The protein resides in the early endosome membrane. Functionally, binds to membranes enriched in phosphatidylinositol 3-phosphate (PtdIns(P3)) and phosphatidylinositol 4,5-bisphosphate. May be involved in several stages of intracellular trafficking. This Homo sapiens (Human) protein is Sorting nexin-21 (SNX21).